The chain runs to 255 residues: 3-oxoacyl-[acyl-carrier-protein] reductase MabA (255 aa).

Residues 33–35 (RGI), Arg-55, 69–70 (DV), Gly-98, Tyr-161, Lys-165, Ile-194, and Arg-205 contribute to the NADP(+) site. Residue Tyr-161 is the Proton acceptor of the active site.

Belongs to the short-chain dehydrogenases/reductases (SDR) family. As to quaternary structure, homotetramer.

It is found in the secreted. It localises to the cell wall. It carries out the reaction a (3R)-hydroxyacyl-[ACP] + NADP(+) = a 3-oxoacyl-[ACP] + NADPH + H(+). It participates in lipid metabolism; mycolic acid biosynthesis. Functionally, part of the mycobacterial fatty acid elongation system FAS-II, which is involved in mycolic acid biosynthesis. Catalyzes the NADPH-dependent reduction of beta-ketoacyl derivatives, the second step of the FAS-II elongation cycle. This is 3-oxoacyl-[acyl-carrier-protein] reductase MabA from Mycobacterium avium.